Reading from the N-terminus, the 432-residue chain is Adenylosuccinate synthetase (432 aa).

Residues 13-19 (GDEGKGK) and 41-43 (GHT) contribute to the GTP site. Asp-14 (proton acceptor) is an active-site residue. The Mg(2+) site is built by Asp-14 and Gly-41. Residues 14–17 (DEGK), 39–42 (NAGH), Thr-130, Arg-144, Gln-225, Thr-240, and Arg-304 contribute to the IMP site. His-42 serves as the catalytic Proton donor. Position 300 to 306 (300 to 306 (ATTGRRR)) interacts with substrate. Residues Arg-306, 332-334 (KLD), and 415-417 (STG) contribute to the GTP site.

It belongs to the adenylosuccinate synthetase family. As to quaternary structure, homodimer. Requires Mg(2+) as cofactor.

The protein resides in the cytoplasm. The catalysed reaction is IMP + L-aspartate + GTP = N(6)-(1,2-dicarboxyethyl)-AMP + GDP + phosphate + 2 H(+). The protein operates within purine metabolism; AMP biosynthesis via de novo pathway; AMP from IMP: step 1/2. Its function is as follows. Plays an important role in the de novo pathway of purine nucleotide biosynthesis. Catalyzes the first committed step in the biosynthesis of AMP from IMP. The polypeptide is Adenylosuccinate synthetase (Citrobacter koseri (strain ATCC BAA-895 / CDC 4225-83 / SGSC4696)).